The following is a 256-amino-acid chain: 5'-nucleotidase SurE (256 aa).

Residues D9, D10, S40, and N94 each contribute to the a divalent metal cation site.

Belongs to the SurE nucleotidase family. It depends on a divalent metal cation as a cofactor.

The protein resides in the cytoplasm. The catalysed reaction is a ribonucleoside 5'-phosphate + H2O = a ribonucleoside + phosphate. Nucleotidase that shows phosphatase activity on nucleoside 5'-monophosphates. The sequence is that of 5'-nucleotidase SurE from Campylobacter fetus subsp. fetus (strain 82-40).